A 302-amino-acid polypeptide reads, in one-letter code: 4-diphosphocytidyl-2-C-methyl-D-erythritol kinase (302 aa).

K20 is a catalytic residue. 106 to 116 (PVASGVGGGSG) is a binding site for ATP. D148 is a catalytic residue.

Belongs to the GHMP kinase family. IspE subfamily.

It carries out the reaction 4-CDP-2-C-methyl-D-erythritol + ATP = 4-CDP-2-C-methyl-D-erythritol 2-phosphate + ADP + H(+). Its pathway is isoprenoid biosynthesis; isopentenyl diphosphate biosynthesis via DXP pathway; isopentenyl diphosphate from 1-deoxy-D-xylulose 5-phosphate: step 3/6. Its function is as follows. Catalyzes the phosphorylation of the position 2 hydroxy group of 4-diphosphocytidyl-2C-methyl-D-erythritol. The chain is 4-diphosphocytidyl-2-C-methyl-D-erythritol kinase from Bartonella henselae (strain ATCC 49882 / DSM 28221 / CCUG 30454 / Houston 1) (Rochalimaea henselae).